Consider the following 521-residue polypeptide: Probable protein phosphatase 2C 16 (521 aa).

Residues 21-327 (KYVVSSMQGW…ENTTVILVQF (307 aa)) form the PPM-type phosphatase domain. Residues D57, G58, Q276, and E318 each coordinate Mn(2+). The segment at 354 to 431 (AAPAGASDTS…ADADDGAPKP (78 aa)) is disordered.

It belongs to the PP2C family. It depends on Mg(2+) as a cofactor. Mn(2+) is required as a cofactor.

The enzyme catalyses O-phospho-L-seryl-[protein] + H2O = L-seryl-[protein] + phosphate. It catalyses the reaction O-phospho-L-threonyl-[protein] + H2O = L-threonyl-[protein] + phosphate. In Oryza sativa subsp. japonica (Rice), this protein is Probable protein phosphatase 2C 16.